A 262-amino-acid chain; its full sequence is MPNPVRPAVQLKDIRKNFGNLEVLHGVSLSANEGEVISILGSSGSGKSTLLRCVNMLEVPNAGSVAIMGEEIALEHRAGRLARPKDLKQVNRLRERAAMVFQGFNLWSHQTILQNVMEAPVHVQGRDRKACRDEAEALLERVGIASKRDAYPSELSGGQQQRAAIARALAMRPDVMLFDEPTSALDPELVGEVLKVMRDLAAEGRTMLIVTHEMDFARDVSSRTVFLHQGVIAEEGPSSEMFAHPRTDRFRQFLRRDGGTSH.

The region spanning 9–254 (VQLKDIRKNF…PRTDRFRQFL (246 aa)) is the ABC transporter domain. 41 to 48 (GSSGSGKS) lines the ATP pocket.

The protein belongs to the ABC transporter superfamily.

It is found in the cell inner membrane. Its function is as follows. Component of the octopine active transport system probably consisting of four subunits: Q, M, P and T. This chain is Octopine permease ATP-binding protein P (occP), found in Rhizobium radiobacter (Agrobacterium tumefaciens).